The following is a 119-amino-acid chain: Putative phosphoethanolamine transferase YjgX (119 aa).

2 helical membrane-spanning segments follow: residues 5–25 (VFPV…VIFW) and 94–114 (LLLS…TIPY).

It belongs to the phosphoethanolamine transferase family.

The protein resides in the cell inner membrane. This is Putative phosphoethanolamine transferase YjgX (yjgX) from Escherichia coli (strain K12).